Reading from the N-terminus, the 301-residue chain is Probable 5-dehydro-4-deoxyglucarate dehydratase (301 aa).

Belongs to the DapA family.

The enzyme catalyses 5-dehydro-4-deoxy-D-glucarate + H(+) = 2,5-dioxopentanoate + CO2 + H2O. Its pathway is carbohydrate acid metabolism; D-glucarate degradation; 2,5-dioxopentanoate from D-glucarate: step 2/2. In Xanthobacter autotrophicus (strain ATCC BAA-1158 / Py2), this protein is Probable 5-dehydro-4-deoxyglucarate dehydratase.